Here is a 434-residue protein sequence, read N- to C-terminus: Nicotinate phosphoribosyltransferase (434 aa).

Histidine 242 carries the phosphohistidine; by autocatalysis modification.

The protein belongs to the NAPRTase family. Post-translationally, transiently phosphorylated on a His residue during the reaction cycle. Phosphorylation strongly increases the affinity for substrates and increases the rate of nicotinate D-ribonucleotide production. Dephosphorylation regenerates the low-affinity form of the enzyme, leading to product release.

It carries out the reaction nicotinate + 5-phospho-alpha-D-ribose 1-diphosphate + ATP + H2O = nicotinate beta-D-ribonucleotide + ADP + phosphate + diphosphate. Its pathway is cofactor biosynthesis; NAD(+) biosynthesis; nicotinate D-ribonucleotide from nicotinate: step 1/1. In terms of biological role, catalyzes the synthesis of beta-nicotinate D-ribonucleotide from nicotinate and 5-phospho-D-ribose 1-phosphate at the expense of ATP. The protein is Nicotinate phosphoribosyltransferase of Rhizobium rhizogenes (strain K84 / ATCC BAA-868) (Agrobacterium radiobacter).